The chain runs to 50 residues: Sperm protamine P1 (50 aa).

This sequence belongs to the protamine P1 family. As to expression, testis.

It is found in the nucleus. Its subcellular location is the chromosome. Protamines substitute for histones in the chromatin of sperm during the haploid phase of spermatogenesis. They compact sperm DNA into a highly condensed, stable and inactive complex. The polypeptide is Sperm protamine P1 (PRM1) (Natalus stramineus (Mexican funnel-eared bat)).